Consider the following 65-residue polypeptide: Large ribosomal subunit protein bL35 (65 aa).

This sequence belongs to the bacterial ribosomal protein bL35 family.

The protein is Large ribosomal subunit protein bL35 of Laribacter hongkongensis (strain HLHK9).